Reading from the N-terminus, the 289-residue chain is Tachykinins (289 aa).

Positions 1-24 (MRPLSGLIALALLLLLLLTAPSSA) are cleaved as a signal peptide. Residues 24–94 (AADTETESSG…DEEADSSYAE (71 aa)) form a disordered region. A propeptide spanning residues 25 to 47 (ADTETESSGSPLTPGAEEPRRVV) is cleaved from the precursor. Arg59 carries the arginine amide modification. Positions 60–69 (GKKDEEHDTS) are enriched in basic and acidic residues. Residue Asn95 is modified to Asparagine amide. Arg110 carries the arginine amide modification. The residue at position 153 (Val153) is a Valine amide. An arginine amide mark is found at Arg165, Arg200, Arg239, and Arg281. Positions 285–289 (PALFE) are excised as a propeptide.

The protein belongs to the tachykinin family. As to expression, strong expression is seen in a group of 14 cells plus one isolated cell in the midgut of stage 17 embryos. Also expressed in a pair of medially located unidentified cells, just posterior to the brain, and in two lateral groups of cells that may be associated with tracheae. Expression in the larval gut is restricted to cells with endocrine cell-like morphology in the posterior midgut, just anterior to the malphigian tubules. In the brain, expression is detected in a restricted number of neuronal cell bodies. Expression in the adult female gut is restricted to the midgut with no expression detected in the hindgut.

The protein localises to the secreted. Tachykinins are active peptides which excite neurons, evoke behavioral responses, are potent vasodilators and secretagogues, and contract (directly or indirectly) many smooth muscles. Stimulates gut muscle contractions. Required for the response to the male sex pheromone CH503 which is transferred from males to females during mating and inhibits courtship behavior by other males. The Gr68a gustatory receptor is required for detection of the pheromone and Gr68a-expressing neurons in the male foreleg relay signals to the suboesophageal zone (SEZ) which leads to courtship suppression through release of tachykinin from a cluster of 8-10 neurons in the SEZ. The protein is Tachykinins of Drosophila melanogaster (Fruit fly).